The sequence spans 676 residues: Electrogenic aspartate/glutamate antiporter SLC25A13, mitochondrial (676 aa).

N-acetylalanine is present on Ala-2. Residues 2–295 (AAAKVALTKR…TLADIERIAP (294 aa)) form a regulatory N-terminal domain region. Residues 2–332 (AAAKVALTKR…LLQLAESAYR (331 aa)) lie on the Mitochondrial intermembrane side of the membrane. EF-hand domains lie at 51–86 (SQPN…SVLC), 87–122 (APDA…TTIH), 125–157 (IPFN…FLLE), and 158–193 (IQLE…IRPH). The Ca(2+) site is built by Asp-66, Thr-68, Asp-70, Leu-72, and Glu-77. The linker loop domain stretch occupies residues 296–312 (LEEGMLPFNLAEAQRQQ). The segment at 322–613 (FLLQLAESAY…LQRWFYVDFG (292 aa)) is carrier domain. Solcar repeat units lie at residues 327-419 (AESA…VRDK), 427-511 (VPLL…VKAS), and 519-607 (VSPG…LQRW). A helical transmembrane segment spans residues 333-350 (FGLGSIAGAVGATAVYPI). Topologically, residues 351 to 393 (DLVKTRMQNQRSTGSFVGELMYKNSFDCFKKVLRYEGFFGLYR) are mitochondrial matrix. Residues Lys-354 and Lys-373 each carry the N6-acetyllysine modification. Residues 394–413 (GLLPQLLGVAPEKAIKLTVN) form a helical membrane-spanning segment. Residues 414–436 (DFVRDKFMHKDGSVPLLAEIFAG) lie on the Mitochondrial intermembrane side of the membrane. The helical transmembrane segment at 437 to 450 (GCAGGSQVIFTNPL) threads the bilayer. Over 451–485 (EIVKIRLQVAGEITTGPRVSALSVVRDLGFFGIYK) the chain is Mitochondrial matrix. At Lys-454 the chain carries N6-methyllysine. The residue at position 485 (Lys-485) is an N6-acetyllysine; alternate. Lys-485 is modified (N6-succinyllysine; alternate). The helical transmembrane segment at 486-505 (GAKACFLRDIPFSAIYFPCY) threads the bilayer. Residues 506-524 (AHVKASFANEDGQVSPGSL) are Mitochondrial intermembrane-facing. Residues 525–542 (LLAGAIAGMPAASLVTPA) form a helical membrane-spanning segment. The Mitochondrial matrix segment spans residues 543 to 581 (DVIKTRLQVAARAGQTTYSGVTDCFRKILREEGPKALWK). At Lys-581 the chain carries N6-succinyllysine. A helical membrane pass occupies residues 582 to 601 (GAGARVFRSSPQFGVTLLTY). Residues 602-676 (ELLQRWFYVD…STSKVTAVGS (75 aa)) are Mitochondrial intermembrane-facing. The C-terminal domain stretch occupies residues 614-676 (GVKPVGSELV…STSKVTAVGS (63 aa)). Lys-663 bears the N6-acetyllysine mark. Ser-667 bears the Phosphoserine mark.

The protein belongs to the mitochondrial carrier (TC 2.A.29) family. As to quaternary structure, homodimer (via N-terminus).

Its subcellular location is the mitochondrion inner membrane. It carries out the reaction L-aspartate(in) + L-glutamate(out) + H(+)(out) = L-aspartate(out) + L-glutamate(in) + H(+)(in). The enzyme catalyses 3-sulfino-L-alanine(out) + L-glutamate(in) + H(+)(in) = 3-sulfino-L-alanine(in) + L-glutamate(out) + H(+)(out). It catalyses the reaction 3-sulfino-L-alanine(out) + L-aspartate(in) = 3-sulfino-L-alanine(in) + L-aspartate(out). With respect to regulation, L-aspartate and 3-sulfino-L-alanine uptake are both inhibited by glisoxepide. In terms of biological role, mitochondrial electrogenic aspartate/glutamate antiporter that favors efflux of aspartate and entry of glutamate and proton within the mitochondria as part of the malate-aspartate shuttle. Also mediates the uptake of L-cysteinesulfinate (3-sulfino-L-alanine) by mitochondria in exchange of L-glutamate and proton. Can also exchange L-cysteinesulfinate with aspartate in their anionic form without any proton translocation. Lacks transport activity towards gamma-aminobutyric acid (GABA). In Rattus norvegicus (Rat), this protein is Electrogenic aspartate/glutamate antiporter SLC25A13, mitochondrial.